A 158-amino-acid polypeptide reads, in one-letter code: Transcription elongation factor GreA (158 aa).

This sequence belongs to the GreA/GreB family.

Functionally, necessary for efficient RNA polymerase transcription elongation past template-encoded arresting sites. The arresting sites in DNA have the property of trapping a certain fraction of elongating RNA polymerases that pass through, resulting in locked ternary complexes. Cleavage of the nascent transcript by cleavage factors such as GreA or GreB allows the resumption of elongation from the new 3'terminus. GreA releases sequences of 2 to 3 nucleotides. This Macrococcus caseolyticus (strain JCSC5402) (Macrococcoides caseolyticum) protein is Transcription elongation factor GreA.